Here is a 1004-residue protein sequence, read N- to C-terminus: MGMRPAARMPSLTQRSRFLIAVSAVLVLLLLLGPRFIDTYVDWLWFGELGYRSVFTTQIITRLVIFFVVAILVGAVVFAGLALAYRTRPVFVPTAGPNDPIARYRTAVMARLRLIGIGVPLAIGVLAGFVGQSYWQRVQLFLHGGDFGVSDPQFGIDLGFYAFDLPFYRLVLTYLFVGVFLAFLANLLGHYLFGGIRLAGRSGALSRAARIQLITLVGLLMLLKAVAYWFDRYELLSHTRGGKPFTGAGYTDINAVLPAKLILMAIAVICAVAVFSAIFLRDLRIPAIGVVLLLLSSLVVGAGWPLVVEQISVRPNAAQKESEYISRSITATRQAYGLTEESVTYRDYPGNASATAQQVAADRATTSNIRVLDPNIVAPAFTQFQQGKNFYFFPDQLNMDRYRDDSGNLRDYVVAARELNPDRLIDNQRDWINRHTVFTHGNGFIASPANTVRGIANDPNQNGGYPEFLASVVGANGEVSSPGPAPLAQPRIYFGPVIASAADDYAIVGESGTPREYDYETNTDTRNYTYTGSGGVPIGNWLTRSVFAAKYAERNFLFSNVINENSKILFNRDPADRVEAVAPWLTTDTTVYPAIVNERIVWIVDGYTTLDNYPYSELSTLSSVTTDSNEVAQNRLQLDKQVSYIRNSVKATVDAYDGTVTLYAQDEQDPVLQAWMKVFPDSVKPKSDITPELQEHLRYPEDLFKVQRALLAKYHVDDPVTFFSTSDFWDVPLDPNPTASSYQPPYYIVAKDLAENNGSASFQLTSAMNRFRRDFLAAYISASSDPETYGRLTVLTVPGQVNGPKLAFNAISTDTAISTELGQIGRDGQNRIRWGNLLTLPMGDGGLLYVAPIYASPGNTDAASTYPRLIRVAMMYNDQIGYGPTVRDALTDLFGPGADATATGPAATEPPAGQAPQTQGNNTAPPAAQPPNRQGQAPAGRPEVPVAVPPTGPTQLSAAKSAALQDVNAALDALRGAQESGDFAQYGEALQRLDDAVNKYQETD.

7 helical membrane passes run 18–38 (FLIAVSAVLVLLLLLGPRFID), 63–83 (LVIFFVVAILVGAVVFAGLAL), 114–134 (LIGIGVPLAIGVLAGFVGQSY), 176–196 (FVGVFLAFLANLLGHYLFGGI), 211–231 (IQLITLVGLLMLLKAVAYWFD), 260–280 (KLILMAIAVICAVAVFSAIFL), and 288–308 (IGVVLLLLSSLVVGAGWPLVV). Over residues 896 to 940 (PGADATATGPAATEPPAGQAPQTQGNNTAPPAAQPPNRQGQAPAG) the composition is skewed to low complexity. The interval 896 to 960 (PGADATATGP…TGPTQLSAAK (65 aa)) is disordered.

This sequence belongs to the UPF0182 family.

Its subcellular location is the cell membrane. This chain is UPF0182 protein Mflv_4654, found in Mycolicibacterium gilvum (strain PYR-GCK) (Mycobacterium gilvum (strain PYR-GCK)).